Consider the following 291-residue polypeptide: Ribosomal RNA small subunit methyltransferase A (291 aa).

S-adenosyl-L-methionine is bound by residues His-21, Leu-23, Gly-48, Glu-70, Asp-95, and Asn-115.

The protein belongs to the class I-like SAM-binding methyltransferase superfamily. rRNA adenine N(6)-methyltransferase family. RsmA subfamily.

It is found in the cytoplasm. The catalysed reaction is adenosine(1518)/adenosine(1519) in 16S rRNA + 4 S-adenosyl-L-methionine = N(6)-dimethyladenosine(1518)/N(6)-dimethyladenosine(1519) in 16S rRNA + 4 S-adenosyl-L-homocysteine + 4 H(+). Specifically dimethylates two adjacent adenosines (A1518 and A1519) in the loop of a conserved hairpin near the 3'-end of 16S rRNA in the 30S particle. May play a critical role in biogenesis of 30S subunits. This Prochlorococcus marinus (strain NATL1A) protein is Ribosomal RNA small subunit methyltransferase A.